Consider the following 95-residue polypeptide: Small ribosomal subunit protein bS6 (95 aa).

Belongs to the bacterial ribosomal protein bS6 family.

Binds together with bS18 to 16S ribosomal RNA. This chain is Small ribosomal subunit protein bS6, found in Bacillus licheniformis (strain ATCC 14580 / DSM 13 / JCM 2505 / CCUG 7422 / NBRC 12200 / NCIMB 9375 / NCTC 10341 / NRRL NRS-1264 / Gibson 46).